We begin with the raw amino-acid sequence, 353 residues long: Photosystem II protein D1 (353 aa).

Residue Thr2 is modified to N-acetylthreonine. Phosphothreonine is present on Thr2. 3 helical membrane passes run Tyr29–Ser46, His118–Leu133, and Trp142–Ala156. Position 118 (His118) interacts with chlorophyll a. Pheophytin a is bound at residue Tyr126. The [CaMn4O5] cluster site is built by Asp170 and Glu189. A helical membrane pass occupies residues Phe197–Leu218. His198 provides a ligand contact to chlorophyll a. A quinone-binding positions include His215 and Ser264–Phe265. His215 serves as a coordination point for Fe cation. Residue His272 participates in Fe cation binding. Residues Phe274–Leu288 form a helical membrane-spanning segment. 4 residues coordinate [CaMn4O5] cluster: His332, Glu333, Asp342, and Ala344. Positions Val345–Gly353 are excised as a propeptide.

It belongs to the reaction center PufL/M/PsbA/D family. PSII is composed of 1 copy each of membrane proteins PsbA, PsbB, PsbC, PsbD, PsbE, PsbF, PsbH, PsbI, PsbJ, PsbK, PsbL, PsbM, PsbT, PsbX, PsbY, PsbZ, Psb30/Ycf12, at least 3 peripheral proteins of the oxygen-evolving complex and a large number of cofactors. It forms dimeric complexes. Requires The D1/D2 heterodimer binds P680, chlorophylls that are the primary electron donor of PSII, and subsequent electron acceptors. It shares a non-heme iron and each subunit binds pheophytin, quinone, additional chlorophylls, carotenoids and lipids. D1 provides most of the ligands for the Mn4-Ca-O5 cluster of the oxygen-evolving complex (OEC). There is also a Cl(-1) ion associated with D1 and D2, which is required for oxygen evolution. The PSII complex binds additional chlorophylls, carotenoids and specific lipids. as cofactor. In terms of processing, tyr-161 forms a radical intermediate that is referred to as redox-active TyrZ, YZ or Y-Z. C-terminally processed by CTPA; processing is essential to allow assembly of the oxygen-evolving complex and thus photosynthetic growth.

The protein localises to the plastid. The protein resides in the chloroplast thylakoid membrane. The catalysed reaction is 2 a plastoquinone + 4 hnu + 2 H2O = 2 a plastoquinol + O2. Photosystem II (PSII) is a light-driven water:plastoquinone oxidoreductase that uses light energy to abstract electrons from H(2)O, generating O(2) and a proton gradient subsequently used for ATP formation. It consists of a core antenna complex that captures photons, and an electron transfer chain that converts photonic excitation into a charge separation. The D1/D2 (PsbA/PsbD) reaction center heterodimer binds P680, the primary electron donor of PSII as well as several subsequent electron acceptors. In Aethionema grandiflorum (Persian stone-cress), this protein is Photosystem II protein D1.